The following is a 262-amino-acid chain: Phosphonates import ATP-binding protein PhnC 3 (262 aa).

The ABC transporter domain maps to 3–245 (IQLECLSVTY…ELNRIYGNAE (243 aa)). Residue 36–43 (GASGSGKS) participates in ATP binding.

It belongs to the ABC transporter superfamily. Phosphonates importer (TC 3.A.1.9.1) family. In terms of assembly, the complex is composed of two ATP-binding proteins (PhnC), two transmembrane proteins (PhnE) and a solute-binding protein (PhnD).

It localises to the cell inner membrane. It catalyses the reaction phosphonate(out) + ATP + H2O = phosphonate(in) + ADP + phosphate + H(+). In terms of biological role, part of the ABC transporter complex PhnCDE involved in phosphonates import. Responsible for energy coupling to the transport system. The sequence is that of Phosphonates import ATP-binding protein PhnC 3 from Nostoc sp. (strain PCC 7120 / SAG 25.82 / UTEX 2576).